The chain runs to 555 residues: Hdr-like menaquinol oxidoreductase iron-sulfur subunit 2 (555 aa).

4Fe-4S ferredoxin-type domains lie at 82-111 and 151-180; these read RSFK…GDPK and KELY…AEIV. [4Fe-4S] cluster is bound by residues Cys91, Cys94, Cys97, Cys101, Cys160, Cys163, Cys166, and Cys170.

Consists of five subunits: an integral membrane subunit, a cytochrome b-like subunit, a cytochrome c subunit and two iron-sulfur subunits. The cofactor is [4Fe-4S] cluster.

Its subcellular location is the cell membrane. Functionally, has menaquinol-oxidizing activity. HmeC and HmeD subunits may together mediate electron transfer from menaquinol to an unidentified electron acceptor on the cytoplasmic side of the membrane. This Archaeoglobus fulgidus (strain ATCC 49558 / DSM 4304 / JCM 9628 / NBRC 100126 / VC-16) protein is Hdr-like menaquinol oxidoreductase iron-sulfur subunit 2 (hmeD).